Here is a 649-residue protein sequence, read N- to C-terminus: MEALLQGLQRQDRMGALQDSCEAELQELMKQIDIMLDHKRSQWEAETETMKTRLELKEQELNCALDREERLNQEVRRLRQQLIQQEEETQNKTTQYEAQLSGFKEELNRLKKSYEKVQKKHLRSEMKAKAEEERSEVSRLTRRLEEFRQRSLDWEKQRLLYQQQLAGLEAQRKTLIEQTEMYQHQSHNRKQMLEQTSLVGRSELQNLSGQLHRANDSLCAKEEELETLKIQLRCAVEGQKRAEHETELSKQAVQALKEEKAELRATLQAHTEFLQGSRVQKHELLPEGYRGSEVLRENNSIRSVEERLQEMGQVGGETEVEAIRSKLSVSRMNEHRLQAEVTCLEDSVESVTSQCQLLAKELKGKEEYFHGVKEDHQKCLSENKKLKGQLSQAELTHKSVLDGMRKEISQLTQELHQRDIRMASSAGIDWERKIKAERQRAEREAAEHRMSLNALENLRQENCRLSELLQTQEPDVAQALVNLEQANQRLQRELLQTQEKLELIAQRRESEIQNAVDSISQELLNKQEQELRIMQERLKVYEQEMQTFRSQQDAASSGSSLESIFSEVWKEQATGSPISAASVDSAIEPVEDLASSLPVPPTSPANAVASRFLQEEEQRSHELLQRLNAHIEELKQESQRTVEHFTQAR.

Coiled-coil stretches lie at residues 19-185 (DSCE…YQHQ) and 222-556 (EEEL…DAAS). Ser560 carries the phosphoserine; by atm and atr modification. Residues 612-645 (FLQEEEQRSHELLQRLNAHIEELKQESQRTVEHF) are a coiled coil.

This sequence belongs to the CEP63 family. In terms of processing, phosphorylation at Ser-560 by atm and atr promotes its delocalization from the centrosome and impairs its ability to promote centrosome dependent spindle assembly.

The protein localises to the cytoplasm. The protein resides in the cytoskeleton. It localises to the microtubule organizing center. It is found in the centrosome. Its subcellular location is the centriole. Functionally, required for normal spindle assembly. Plays a key role in mother-centriole-dependent centriole duplication. Plays a role in DNA damage response. Following DNA damage, such as double-strand breaks (DSBs), is removed from centrosomes; this leads to the inactivation of spindle assembly and delay in mitotic progression. This Xenopus laevis (African clawed frog) protein is Centrosomal protein of 63 kDa-A (cep63-a).